The primary structure comprises 83 residues: Alpha-conotoxin QcIA (83 aa).

A signal peptide spans 1-21; sequence MGMRMMFTLFLLAVLSTTVVS. The propeptide occupies 22–48; sequence FTLDRASNGRDAAADSKAADQIAQTVR. 2 cysteine pairs are disulfide-bonded: cysteine 51–cysteine 57 and cysteine 52–cysteine 65. Residues 53–55 form a ser-Xaa-Pro motif, crucial for potent interaction with nAChR region; sequence SNP. Residues 66–83 constitute a propeptide that is removed on maturation; that stretch reads RRTLMLQNPLNHDMSPSA.

It belongs to the conotoxin A superfamily. In terms of tissue distribution, expressed by the venom duct.

Its subcellular location is the secreted. Its function is as follows. Alpha-conotoxins bind to the nicotinic acetylcholine receptors (nAChR) and inhibit them. A synthetic amidated version of this toxin potently and preferentially antagonizes neuronal rat alpha-3-beta-2 (IC(50)=55.7 nM) and alpha-6/alpha-3-beta-4 (IC(50)=90.69 nM) nAChRs. The sequence is that of Alpha-conotoxin QcIA from Conus quercinus (Oak cone).